Reading from the N-terminus, the 1292-residue chain is MKKHFTLPRNAILRDGGEPHSPNPSISKSKPPRKLRSAKENAPPLDRNTSTPDHRSMRMKNPLPPRPPPSNPLKRKLSAETATESGFSDSGVKVIVRMKPLNKGEEGDMIVEKMSKDSLTVSGQTFTFDSIANPESTQEQMFQLVGAPLVENCLSGFNSSVFAYGQTGSGKTYTMWGPANGLLEEHLCGDQRGLTPRVFERLFARIKEEQVKHAERQLNYQCRCSLLEIYNEQITDLLDPSQKNLMIREDVKSGVYVENLTEEYVKNLTDVSQLLIKGLGNRRTGATSVNTESSRSHCVFTCVVESRCKNVADGLSSFKTSRINLVDLAGSERQKSTGAAGERLKEAGNINRSLSQLGNLINILAEISQTGKPRHIPYRDSRLTFLLQESLGGNAKLAMVCAVSPSQSCRSETFSTLRFAQRAKAIQNKAVVNEVMQDDVNFLRGVIHQLRDELQRMKNDGNNPTNPNVAYSTAWNARRSLNLLRSFGLGHPRSLPHEDNDGDIEMEIDEAAVERLCVQVGLQSSLASEGINHDMNRVKSIHSSDGQSIEKRLPEDSDVAMEDACCHTENHEPETVDNMRTETETGIRENQIKTHSQTLDHESSFQPLSVKDALCSSLNKSEDVSSCPDLVPQDVTSANVLIADGVDDPEHLVNSASPSLCIDPVGATPVLKSPTLSVSPTIRNSRKSLKTSELSTASQKDSEGENLVTEAADPSPATSKKMNNCSSALSTQKSKVFPVRTERLASSLHKGIKLLESYCQSTAQRRSTYRFSFKAPDSEPSTSISKADAGVQTIPGADAISEENTKEFLCCKCKCREQFDAQQMGDMPNLQLVPVDNSEVAEKSKNQVPKAVEKVLAGSIRREMALEEFCTKQASEITQLNRLVQQYKHERECNAIIGQTREDKIIRLESLMDGVLSKEDFLDEEFASLLHEHKLLKDMYQNHPEVLKTKIELERTQEEVENFKNFYGDMGEREVLLEEIQDLKLQLQCYIDPSLKSALKTCTLLKLSYQAPPVNAIPESQDESLEKTLEQERLCWTEAETKWISLSEELRTELEASKALINKQKHELEIEKRCGEELKEAMQMAMEGHARMLEQYADLEEKHMQLLARHRRIQDGIDDVKKAAARAGVRGAESRFINALAAEISALKVEKEKERQYLRDENKSLQTQLRDTAEAIQAAGELLVRLKEAEEGLTVAQKRAMDAEYEAAEAYRQIDKLKKKHENEINTLNQLVPQSHIHNECSTKCDQAVEPSVNASSEQQWRDEFEPLYKKETEFSNLAEPSWFSGYDRCNI.

Residues 1 to 86 (MKKHFTLPRN…LSAETATESG (86 aa)) are disordered. Over residues 19-29 (PHSPNPSISKS) the composition is skewed to low complexity. Residues 62-71 (PLPPRPPPSN) are compositionally biased toward pro residues. One can recognise a Kinesin motor domain in the interval 91–426 (GVKVIVRMKP…LRFAQRAKAI (336 aa)). Residue 165–172 (GQTGSGKT) coordinates ATP. Microtubules-binding regions lie at residues 293-297 (SSRSH), 326-332 (VDLAGSE), and 375-379 (HIPYR). Residues 424–461 (KAIQNKAVVNEVMQDDVNFLRGVIHQLRDELQRMKNDG) are neck. The disordered stretch occupies residues 677 to 724 (SVSPTIRNSRKSLKTSELSTASQKDSEGENLVTEAADPSPATSKKMNN). Coiled-coil stretches lie at residues 945-992 (EVLK…CYID) and 1047-1232 (SEEL…NQLV).

The protein belongs to the TRAFAC class myosin-kinesin ATPase superfamily. Kinesin family. KIN-12 subfamily. Homodimer and heterodimer with KIN12B. Interacts with TIO.

The protein resides in the cytoplasm. The protein localises to the cytoskeleton. It is found in the phragmoplast. In terms of biological role, plus-end directed kinesin-like motor enzyme that plays a critical role in the organization of phragmoplast microtubules during cytokinesis. Constitutes a signaling module in association with serine/threonine-protein kinase TIO that is required to support phragmoplast expansion and cell-plate growth in plant cells. Binds microtubules in an ATP-sensitive manner. The protein is Kinesin-like protein KIN-12A of Arabidopsis thaliana (Mouse-ear cress).